Here is a 191-residue protein sequence, read N- to C-terminus: Orotate phosphoribosyltransferase (191 aa).

Glu114–Ser122 contacts 5-phospho-alpha-D-ribose 1-diphosphate. The orotate site is built by Thr118 and Arg146.

This sequence belongs to the purine/pyrimidine phosphoribosyltransferase family. PyrE subfamily. Homodimer. Requires Mg(2+) as cofactor.

The enzyme catalyses orotidine 5'-phosphate + diphosphate = orotate + 5-phospho-alpha-D-ribose 1-diphosphate. Its pathway is pyrimidine metabolism; UMP biosynthesis via de novo pathway; UMP from orotate: step 1/2. Catalyzes the transfer of a ribosyl phosphate group from 5-phosphoribose 1-diphosphate to orotate, leading to the formation of orotidine monophosphate (OMP). This Clostridium botulinum (strain ATCC 19397 / Type A) protein is Orotate phosphoribosyltransferase.